A 76-amino-acid chain; its full sequence is uncharacterized protein (76 aa).

This is an uncharacterized protein from Sulfolobus islandicus filamentous virus (isolate Iceland/Hveragerdi) (SIFV).